Consider the following 262-residue polypeptide: S-methyl-5'-thioadenosine phosphorylase (262 aa).

Phosphate is bound by residues serine 12, 54-55 (RH), and 87-88 (SA). Residue methionine 185 participates in substrate binding. Threonine 186 is a binding site for phosphate. 209-211 (DYD) contributes to the substrate binding site.

It belongs to the PNP/MTAP phosphorylase family. MTAP subfamily. Homohexamer. Dimer of a homotrimer.

The enzyme catalyses S-methyl-5'-thioadenosine + phosphate = 5-(methylsulfanyl)-alpha-D-ribose 1-phosphate + adenine. The protein operates within amino-acid biosynthesis; L-methionine biosynthesis via salvage pathway; S-methyl-5-thio-alpha-D-ribose 1-phosphate from S-methyl-5'-thioadenosine (phosphorylase route): step 1/1. Catalyzes the reversible phosphorylation of S-methyl-5'-thioadenosine (MTA) to adenine and 5-methylthioribose-1-phosphate. Involved in the breakdown of MTA, a major by-product of polyamine biosynthesis. Responsible for the first step in the methionine salvage pathway after MTA has been generated from S-adenosylmethionine. Has broad substrate specificity with 6-aminopurine nucleosides as preferred substrates. This chain is S-methyl-5'-thioadenosine phosphorylase, found in Thermofilum pendens (strain DSM 2475 / Hrk 5).